We begin with the raw amino-acid sequence, 346 residues long: Peripherin-2 (346 aa).

Over 1–24 the chain is Cytoplasmic; the sequence is MALLKVKFDQKKRVKLAQGLWLMN. The chain crosses the membrane as a helical span at residues 25-43; it reads WLSVLAGIVLFSLGLFLKI. The Lumenal segment spans residues 44-61; that stretch reads ELRKRSDVMDNSESHFVP. The chain crosses the membrane as a helical span at residues 62 to 80; it reads NSLIGVGVLSCVFNSLAGK. Residues 81–99 are Cytoplasmic-facing; it reads ICYDALDPAKYAKWKPWLK. A helical transmembrane segment spans residues 100–123; the sequence is LYLAVCVFFNVILFLVALCCFLLR. Residues 124–264 are Lumenal-facing; sequence GSLESTLAYG…LNYYSSLMNS (141 aa). N-linked (GlcNAc...) asparagine glycosylation occurs at Asn-229. A helical transmembrane segment spans residues 265–290; that stretch reads MGVVTLLIWLFEVSITAGLRFLHTAL. Over 291–346 the chain is Cytoplasmic; sequence ESVSNPEDPECESEGWLLENSVSETWKAFLESFKKLGKSNQVEAEAADAGQAPEAG. The tract at residues 341-346 is interaction with MREG; sequence QAPEAG.

The protein belongs to the PRPH2/ROM1 family. As to quaternary structure, homodimer; disulfide-linked. Forms a homotetramer. Forms a heterotetramer with ROM1. Homotetramer and heterotetramer core complexes go on to form higher order complexes by formation of intermolecular disulfide bonds. Interacts with MREG. Interacts with STX3. Interacts with SNAP25. As to expression, retina (photoreceptor). In rim region of ROS (rod outer segment) disks.

It localises to the membrane. The protein resides in the cell projection. The protein localises to the cilium. It is found in the photoreceptor outer segment. Its subcellular location is the photoreceptor inner segment. Functionally, essential for retina photoreceptor outer segment disk morphogenesis, may also play a role with ROM1 in the maintenance of outer segment disk structure. Required for the maintenance of retinal outer nuclear layer thickness. Required for the correct development and organization of the photoreceptor inner segment. This chain is Peripherin-2 (Prph2), found in Rattus norvegicus (Rat).